Here is a 373-residue protein sequence, read N- to C-terminus: UDP-N-acetylenolpyruvoylglucosamine reductase (373 aa).

Residues 30–203 (LACTANSVVT…SRVGFRLHTD (174 aa)) form the FAD-binding PCMH-type domain. Arginine 180 is an active-site residue. Serine 258 serves as the catalytic Proton donor. The active site involves glutamate 356.

This sequence belongs to the MurB family. FAD serves as cofactor.

Its subcellular location is the cytoplasm. It carries out the reaction UDP-N-acetyl-alpha-D-muramate + NADP(+) = UDP-N-acetyl-3-O-(1-carboxyvinyl)-alpha-D-glucosamine + NADPH + H(+). Its pathway is cell wall biogenesis; peptidoglycan biosynthesis. Its function is as follows. Cell wall formation. This is UDP-N-acetylenolpyruvoylglucosamine reductase from Psychrobacter arcticus (strain DSM 17307 / VKM B-2377 / 273-4).